A 421-amino-acid chain; its full sequence is 4-methylaminobutanoate oxidase (methylamine-forming) (421 aa).

Residues glutamate 31, arginine 33, arginine 39, and glutamate 379 each contribute to the FAD site.

This sequence belongs to the flavin monoamine oxidase family. As to quaternary structure, monomer. Requires FAD as cofactor.

The enzyme catalyses 4-(methylamino)butanoate + O2 + H2O = succinate semialdehyde + methylamine + H2O2. Its pathway is alkaloid degradation; nicotine degradation. In terms of biological role, catalyzes the removal of methylamine from 4-methylaminobutanoate with the formation of succinate semialdehyde. Is involved in the catabolism of 4-methylaminobutanoate produced from nicotine. Has a very weak monoamine oxidase activity with 4-aminobutanoate. Cannot use spermidine, spermine, sarcosine, dimethylglycine, glycine, choline, betaine, alpha-methylamino isobutyrate, methylamine propionitrile and methylamino propylamine as substrate. The sequence is that of 4-methylaminobutanoate oxidase (methylamine-forming) (mao) from Paenarthrobacter nicotinovorans (Arthrobacter nicotinovorans).